Here is a 310-residue protein sequence, read N- to C-terminus: Spermatid maturation protein 1 (310 aa).

The helical transmembrane segment at Ile29–Leu49 threads the bilayer. The segment at Ala215 to Pro238 is disordered. Positions Val262 to Tyr286 form a coiled coil.

As to expression, testis-specific. Exclusively present in cytoplasm of steps 14-16 elongated spermatids (at protein level).

It localises to the membrane. It is found in the cytoplasm. Its function is as follows. Required for proper cytoplasm removal during spermatogenesis. This Mus musculus (Mouse) protein is Spermatid maturation protein 1 (Spem1).